A 430-amino-acid chain; its full sequence is Enolase (430 aa).

Gln-167 is a binding site for (2R)-2-phosphoglycerate. The active-site Proton donor is Glu-209. Asp-245, Glu-286, and Asp-313 together coordinate Mg(2+). (2R)-2-phosphoglycerate is bound by residues Lys-338, Arg-367, Ser-368, and Lys-389. Lys-338 (proton acceptor) is an active-site residue.

Belongs to the enolase family. Mg(2+) serves as cofactor.

The protein resides in the cytoplasm. It is found in the secreted. It localises to the cell surface. It catalyses the reaction (2R)-2-phosphoglycerate = phosphoenolpyruvate + H2O. Its pathway is carbohydrate degradation; glycolysis; pyruvate from D-glyceraldehyde 3-phosphate: step 4/5. Catalyzes the reversible conversion of 2-phosphoglycerate (2-PG) into phosphoenolpyruvate (PEP). It is essential for the degradation of carbohydrates via glycolysis. This is Enolase from Synechococcus sp. (strain CC9311).